The following is a 640-amino-acid chain: Probable potassium transport system protein Kup 1 (640 aa).

Helical transmembrane passes span 25 to 45 (LVLA…LYAL), 65 to 85 (VVSL…VMVL), 115 to 135 (AVGW…DGVI), 153 to 173 (PALA…LFMI), 181 to 201 (VGAA…ALGL), 227 to 247 (GFAG…AEAL), 263 to 283 (WYGL…ALLL), 305 to 325 (MVAL…TAVF), 353 to 373 (IYLP…VLGF), 381 to 401 (AAFG…FAVL), 410 to 430 (WWAV…FWLA), and 438 to 458 (GGWL…CWFG).

Belongs to the HAK/KUP transporter (TC 2.A.72) family.

It is found in the cell inner membrane. It catalyses the reaction K(+)(in) + H(+)(in) = K(+)(out) + H(+)(out). In terms of biological role, transport of potassium into the cell. Likely operates as a K(+):H(+) symporter. This Chromobacterium violaceum (strain ATCC 12472 / DSM 30191 / JCM 1249 / CCUG 213 / NBRC 12614 / NCIMB 9131 / NCTC 9757 / MK) protein is Probable potassium transport system protein Kup 1.